The chain runs to 104 residues: Protein RnfH (104 aa).

It belongs to the UPF0125 (RnfH) family.

This Pseudomonas syringae pv. syringae (strain B728a) protein is Protein RnfH.